The sequence spans 371 residues: DNA replication and repair protein RecF (371 aa).

Gly30 to Thr37 serves as a coordination point for ATP.

The protein belongs to the RecF family.

It localises to the cytoplasm. Functionally, the RecF protein is involved in DNA metabolism; it is required for DNA replication and normal SOS inducibility. RecF binds preferentially to single-stranded, linear DNA. It also seems to bind ATP. The polypeptide is DNA replication and repair protein RecF (Staphylococcus epidermidis (strain ATCC 35984 / DSM 28319 / BCRC 17069 / CCUG 31568 / BM 3577 / RP62A)).